Reading from the N-terminus, the 103-residue chain is Protamine-3 (103 aa).

Positions 1-103 (MGSRCAKLNT…QSPEPKRTPS (103 aa)) are disordered. The segment covering 10–21 (TGQSPGHSPGHS) has biased composition (low complexity). The segment covering 50 to 66 (GEEEEEEEEEGEEEEKE) has biased composition (acidic residues). A compositionally biased stretch (basic and acidic residues) spans 78-90 (EPERQEEGHKDNA). Serine 95 carries the post-translational modification Phosphoserine.

Belongs to the protamine P3 family.

The protein localises to the nucleus. It localises to the chromosome. Its function is as follows. Protamines substitute for histones in the chromatin of sperm during the haploid phase of spermatogenesis. They compact sperm DNA into a highly condensed, stable and inactive complex. This is Protamine-3 (PRM3) from Homo sapiens (Human).